The chain runs to 358 residues: Forkhead box protein I1c (358 aa).

Positions 1 to 13 (MNSIHLPSHQRTS) are enriched in polar residues. Disordered regions lie at residues 1–25 (MNSI…PKGA) and 191–255 (DNGN…PSGI). A DNA-binding region (fork-head) is located at residues 106–200 (RPPYSYSALI…DNGNFRRKRK (95 aa)).

It is found in the nucleus. Probable transcription factor. The chain is Forkhead box protein I1c from Xenopus tropicalis (Western clawed frog).